Reading from the N-terminus, the 190-residue chain is Protein FAM210B, mitochondrial (190 aa).

Residues 1–58 (MAGLLTLLGPAGRVSTRLRPLAPWLLGTATSCAPPLWALALSHPVPDARLLRTARGDC) constitute a mitochondrion transit peptide. Residues 56–66 (GDCLSRQEPNR) are compositionally biased toward basic and acidic residues. The interval 56–81 (GDCLSRQEPNRTPEPGGSVTGTEKKL) is disordered. Residues 78–189 (EKKLSRTQQL…VGLFKPPATK (112 aa)) form the DUF1279 domain. Transmembrane regions (helical) follow at residues 97–117 (VGVS…YTVV) and 148–168 (FVVA…ITLV).

Belongs to the FAM210 family. In terms of tissue distribution, expressed in late erythroblast differentiation stages.

It is found in the mitochondrion. It localises to the mitochondrion outer membrane. Its function is as follows. Plays a role in erythroid differentiation. Involved in cell proliferation and tumor cell growth suppression. Involved in the metabolic reprogramming of cancer cells in a PDK4-dependent manner. In Mus musculus (Mouse), this protein is Protein FAM210B, mitochondrial.